The primary structure comprises 308 residues: ADP-L-glycero-D-manno-heptose-6-epimerase (308 aa).

NADP(+)-binding positions include 10–11 (MI), 31–32 (DN), Lys-38, Lys-53, 75–79 (EGACS), and Asn-92. Tyr-140 serves as the catalytic Proton acceptor. Lys-144 is a binding site for NADP(+). Asn-169 is a substrate binding site. Positions 170 and 178 each coordinate NADP(+). The Proton acceptor role is filled by Lys-178. Residues Ser-180, His-187, 201 to 204 (FEGS), Arg-209, and Tyr-272 each bind substrate.

It belongs to the NAD(P)-dependent epimerase/dehydratase family. HldD subfamily. In terms of assembly, homopentamer. It depends on NADP(+) as a cofactor.

It carries out the reaction ADP-D-glycero-beta-D-manno-heptose = ADP-L-glycero-beta-D-manno-heptose. It participates in nucleotide-sugar biosynthesis; ADP-L-glycero-beta-D-manno-heptose biosynthesis; ADP-L-glycero-beta-D-manno-heptose from D-glycero-beta-D-manno-heptose 7-phosphate: step 4/4. Catalyzes the interconversion between ADP-D-glycero-beta-D-manno-heptose and ADP-L-glycero-beta-D-manno-heptose via an epimerization at carbon 6 of the heptose. The polypeptide is ADP-L-glycero-D-manno-heptose-6-epimerase (Actinobacillus pleuropneumoniae serotype 7 (strain AP76)).